The primary structure comprises 272 residues: Testis-specific gene 13 protein (272 aa).

The polypeptide is Testis-specific gene 13 protein (TSGA13) (Bos taurus (Bovine)).